Here is a 205-residue protein sequence, read N- to C-terminus: ATP-dependent Clp protease proteolytic subunit (205 aa).

The active-site Nucleophile is the Ser98. The active site involves His123.

Belongs to the peptidase S14 family. In terms of assembly, fourteen ClpP subunits assemble into 2 heptameric rings which stack back to back to give a disk-like structure with a central cavity, resembling the structure of eukaryotic proteasomes.

The protein resides in the cytoplasm. It catalyses the reaction Hydrolysis of proteins to small peptides in the presence of ATP and magnesium. alpha-casein is the usual test substrate. In the absence of ATP, only oligopeptides shorter than five residues are hydrolyzed (such as succinyl-Leu-Tyr-|-NHMec, and Leu-Tyr-Leu-|-Tyr-Trp, in which cleavage of the -Tyr-|-Leu- and -Tyr-|-Trp bonds also occurs).. Cleaves peptides in various proteins in a process that requires ATP hydrolysis. Has a chymotrypsin-like activity. Plays a major role in the degradation of misfolded proteins. In Desulforapulum autotrophicum (strain ATCC 43914 / DSM 3382 / VKM B-1955 / HRM2) (Desulfobacterium autotrophicum), this protein is ATP-dependent Clp protease proteolytic subunit.